Consider the following 84-residue polypeptide: Small ribosomal subunit protein eS27 (84 aa).

The C4-type zinc finger occupies 38-60 (CPKCGATTTTFSHAHRQILCQKC).

The protein belongs to the eukaryotic ribosomal protein eS27 family. Component of the small ribosomal subunit. Zn(2+) is required as a cofactor.

It localises to the cytoplasm. Functionally, component of the small ribosomal subunit. The ribosome is a large ribonucleoprotein complex responsible for the synthesis of proteins in the cell. Required for proper rRNA processing and maturation of 18S rRNAs. This is Small ribosomal subunit protein eS27 (RPS27) from Entamoeba histolytica (strain ATCC 30459 / HM-1:IMSS / ABRM).